Reading from the N-terminus, the 580-residue chain is MFS-type transporter thnB (580 aa).

Residues 1–33 form a disordered region; that stretch reads MSGDYSATRKSENVDTSTTASQEDSSLAPEQPE. Residues 14-25 are compositionally biased toward polar residues; the sequence is VDTSTTASQEDS. 7 consecutive transmembrane segments (helical) span residues 60 to 80, 92 to 112, 125 to 145, 157 to 177, 188 to 208, 216 to 236, and 259 to 279; these read LITL…DQTI, FHGL…LGGF, LKIS…ICGV, AIAG…LAFS, STMG…GGAF, WCFY…FLFF, and VGTV…QYAG. Asn285 is a glycosylation site (N-linked (GlcNAc...) asparagine). Helical transmembrane passes span 286-306, 331-351, 364-384, 389-409, 421-441, 457-477, and 529-549; these read SSVV…LAAW, IFQF…PIYF, VDNL…GAAV, MATP…GLLY, IGYQ…ALNI, SLYF…QAAF, and FAVS…MVMI.

Belongs to the major facilitator superfamily.

The protein localises to the membrane. Functionally, MFS-type transporter; part of the gene cluster that produces the tetronate natural products trihazones. This is MFS-type transporter thnB from Trichoderma harzianum (Hypocrea lixii).